Reading from the N-terminus, the 564-residue chain is Eukaryotic translation initiation factor 3 subunit L (564 aa).

Ser2 carries the post-translational modification N-acetylserine. One can recognise a PCI domain in the interval 331 to 537 (DAIRVFANIL…IHIADTKVAR (207 aa)). N6-acetyllysine occurs at positions 465 and 549.

The protein belongs to the eIF-3 subunit L family. In terms of assembly, component of the eukaryotic translation initiation factor 3 (eIF-3) complex, which is composed of 13 subunits: EIF3A, EIF3B, EIF3C, EIF3D, EIF3E, EIF3F, EIF3G, EIF3H, EIF3I, EIF3J, EIF3K, EIF3L and EIF3M. The eIF-3 complex appears to include 3 stable modules: module A is composed of EIF3A, EIF3B, EIF3G and EIF3I; module B is composed of EIF3F, EIF3H, and EIF3M; and module C is composed of EIF3C, EIF3D, EIF3E, EIF3K and EIF3L. EIF3C of module C binds EIF3B of module A and EIF3H of module B, thereby linking the three modules. EIF3J is a labile subunit that binds to the eIF-3 complex via EIF3B. The eIF-3 complex interacts with RPS6KB1 under conditions of nutrient depletion. Mitogenic stimulation leads to binding and activation of a complex composed of MTOR and RPTOR, leading to phosphorylation and release of RPS6KB1 and binding of EIF4B to eIF-3. Interacts with RRN3.

It is found in the cytoplasm. In terms of biological role, component of the eukaryotic translation initiation factor 3 (eIF-3) complex, which is required for several steps in the initiation of protein synthesis. The eIF-3 complex associates with the 40S ribosome and facilitates the recruitment of eIF-1, eIF-1A, eIF-2:GTP:methionyl-tRNAi and eIF-5 to form the 43S pre-initiation complex (43S PIC). The eIF-3 complex stimulates mRNA recruitment to the 43S PIC and scanning of the mRNA for AUG recognition. The eIF-3 complex is also required for disassembly and recycling of post-termination ribosomal complexes and subsequently prevents premature joining of the 40S and 60S ribosomal subunits prior to initiation. The eIF-3 complex specifically targets and initiates translation of a subset of mRNAs involved in cell proliferation, including cell cycling, differentiation and apoptosis, and uses different modes of RNA stem-loop binding to exert either translational activation or repression. This chain is Eukaryotic translation initiation factor 3 subunit L, found in Bos taurus (Bovine).